A 345-amino-acid chain; its full sequence is Anthranilate phosphoribosyltransferase (345 aa).

Residues G84, 87-88, T92, 94-97, 112-120, and S124 each bind 5-phospho-alpha-D-ribose 1-diphosphate; these read GD, NIST, and KHGNRSVSS. Position 84 (G84) interacts with anthranilate. S96 contacts Mg(2+). Residue N115 coordinates anthranilate. Anthranilate is bound at residue R170. D229 and E230 together coordinate Mg(2+).

It belongs to the anthranilate phosphoribosyltransferase family. As to quaternary structure, homodimer. It depends on Mg(2+) as a cofactor.

The enzyme catalyses N-(5-phospho-beta-D-ribosyl)anthranilate + diphosphate = 5-phospho-alpha-D-ribose 1-diphosphate + anthranilate. It participates in amino-acid biosynthesis; L-tryptophan biosynthesis; L-tryptophan from chorismate: step 2/5. Catalyzes the transfer of the phosphoribosyl group of 5-phosphorylribose-1-pyrophosphate (PRPP) to anthranilate to yield N-(5'-phosphoribosyl)-anthranilate (PRA). This is Anthranilate phosphoribosyltransferase from Xanthomonas campestris pv. campestris (strain 8004).